A 330-amino-acid polypeptide reads, in one-letter code: GRB2-related adapter protein 2 (330 aa).

The SH3 1 domain maps to methionine 1–proline 56. Tyrosine 45 is modified (phosphotyrosine). An SH2 domain is found at tryptophan 58–threonine 149. At lysine 106 the chain carries N6-acetyllysine. The segment at isoleucine 143–cysteine 244 is disordered. Residues phenylalanine 144 to serine 164 show a composition bias toward basic and acidic residues. Position 187 is a phosphoserine (serine 187). The span at proline 209–tyrosine 222 shows a compositional bias: low complexity. Phosphoserine is present on serine 236. Threonine 262 carries the post-translational modification Phosphothreonine. In terms of domain architecture, SH3 2 spans glycine 271–arginine 330.

This sequence belongs to the GRB2/sem-5/DRK family. In terms of assembly, interacts with phosphorylated LIME1 upon TCR activation. Interacts with phosphorylated LAT and LAX1 upon TCR activation. Interacts with SHB. Interacts with PTPN23.

It is found in the nucleus. The protein localises to the cytoplasm. The protein resides in the endosome. Functionally, interacts with SLP-76 to regulate NF-AT activation. Binds to tyrosine-phosphorylated shc. This chain is GRB2-related adapter protein 2 (GRAP2), found in Homo sapiens (Human).